A 507-amino-acid chain; its full sequence is Glucose-6-phosphate isomerase (507 aa).

Residue E337 is the Proton donor of the active site. Active-site residues include H368 and K478.

This sequence belongs to the GPI family.

It is found in the cytoplasm. The catalysed reaction is alpha-D-glucose 6-phosphate = beta-D-fructose 6-phosphate. It participates in carbohydrate biosynthesis; gluconeogenesis. It functions in the pathway carbohydrate degradation; glycolysis; D-glyceraldehyde 3-phosphate and glycerone phosphate from D-glucose: step 2/4. Catalyzes the reversible isomerization of glucose-6-phosphate to fructose-6-phosphate. The sequence is that of Glucose-6-phosphate isomerase from Novosphingobium aromaticivorans (strain ATCC 700278 / DSM 12444 / CCUG 56034 / CIP 105152 / NBRC 16084 / F199).